A 444-amino-acid chain; its full sequence is 4-O-dimethylallyl-L-tyrosine synthase (444 aa).

Belongs to the tryptophan dimethylallyltransferase family. Homodimer.

The catalysed reaction is L-tyrosine + dimethylallyl diphosphate = 4-O-dimethylallyl-L-tyrosine + diphosphate. Functionally, 4-O-dimethylallyl-L-tyrosine synthase; part of the gene cluster that mediates the biosynthesis of an unusual class of epipolythiodioxopiperazines (ETPs) lacking the reactive thiol group important for toxicity. Firstly, L-tyrosine is prenylated by tcpD, before undergoing condensation with L-glycine in a reaction catalyzed by the NRPS tcpP leading to the diketopiperazine (DKP) backbone. Afterwards the alpha-carbon of tyrosine is oxidized by the cytochrome P450 tcpC to form a hydroxyl group. However, in contrast other ETP biosynthesis pathways studied so far, tcpC is not able to bishydroxylate the DKP at both alpha-carbon positions, but hydroxylates the alpha-carbon of the tyrosine part and the nitrogen of the glycine part. The next steps involve an alpha,beta-elimination reaction catalyzed by tcpI, a methylation by the methyltransferase tcpN the action of the four enzyme cascade tcpG/K/J/I. Due to a dysfunctional cytochrome P450 monooxygenase tcpC, the pathway leads to the biosynthesis of probable non-toxic metabolites lacking the reactive thiol group. In Claviceps purpurea (strain 20.1) (Ergot fungus), this protein is 4-O-dimethylallyl-L-tyrosine synthase.